The chain runs to 790 residues: Solute carrier family 26 member 9 (790 aa).

Residues 1 to 70 (MNQPRPRYVV…WLPKYKIKDY (70 aa)) are Cytoplasmic-facing. The chain crosses the membrane as a helical span at residues 71–96 (IIPDLLGGLSGGCIQVPQGMAFALLA). At 97-100 (NLPA) the chain is on the extracellular side. A helical membrane pass occupies residues 101 to 109 (VNGLYSSFF). Residues 110-129 (PLLTYFFLGGIHQMVPGTFA) are Cytoplasmic-facing. Residues 130–142 (VISILVGNICLQL) form a helical membrane-spanning segment. The Extracellular segment spans residues 143 to 162 (APESKFQIFNNVTNETYVDT). Residues 163–191 (AAMEAERLHVSATLACLTAVIQMALGFMQ) traverse the membrane as a helical segment. Over 192–201 (FGFVAIYLSE) the chain is Cytoplasmic. The chain crosses the membrane as a helical span at residues 202–224 (SFIRGFMTAAGLQILISVLKYIF). The Extracellular portion of the chain corresponds to 225–237 (GLTIPSYTGPGSI). Residues 238–246 (VFTFIDICK) constitute an intramembrane region (helical). Residues 247-254 (NLPHTNIA) are Extracellular-facing. The chain crosses the membrane as a helical span at residues 255 to 275 (SLIFALVSGVFLVLVKELNAR). Residues 276–286 (YMHKIHFPIPT) lie on the Cytoplasmic side of the membrane. Residues 287–299 (EMIVVVVATAISG) traverse the membrane as a helical segment. Topologically, residues 300-334 (SCKMPKKYHMQIVGEIRQGFPTPVAPMVSQWKGMV) are extracellular. The chain crosses the membrane as a helical span at residues 335 to 358 (GTAFSLAIVGYVINLAMGRTLASK). The Cytoplasmic segment spans residues 359-365 (HGYDVDS). Residues 366 to 379 (NQEMIALGCSNFFG) traverse the membrane as a helical segment. Topologically, residues 380 to 390 (SFFKIHVICCA) are extracellular. The helical transmembrane segment at 391–400 (LSVTLAVDGA) threads the bilayer. Topologically, residues 401-405 (GGKSQ) are cytoplasmic. A helical transmembrane segment spans residues 406 to 419 (VASLCVSLVVMITM). Residues 420-431 (LVLGSYLYPLPK) lie on the Extracellular side of the membrane. A helical membrane pass occupies residues 432–457 (AVLGALIAVNLKNSLKQLTDPYYLWR). At 458-461 (KSKL) the chain is on the cytoplasmic side. The helical transmembrane segment at 462–476 (DCCVWVVSFLSSFFL) threads the bilayer. The Extracellular segment spans residues 477-479 (SLP). Residues 480–498 (YGVAVGVAFSILVVIFQTQ) traverse the membrane as a helical segment. Residues 499-790 (FRNGSTLAQV…MFHTETLTAL (292 aa)) are Cytoplasmic-facing. Residues 519 to 737 (TYNRAQEIAG…PSIHDAVLFA (219 aa)) form the STAS domain.

It belongs to the SLC26A/SulP transporter (TC 2.A.53) family. As to quaternary structure, homodimer. Expressed in stomach and trachea. Abundantly expressed in the apical domain of the surface epithelial cells and the deep cells in the gastric gland. Also expressed in heart, brain, lung and liver.

The protein resides in the cell membrane. It localises to the endomembrane system. It carries out the reaction chloride(in) = chloride(out). It catalyses the reaction hydrogencarbonate(in) + chloride(out) = hydrogencarbonate(out) + chloride(in). Its activity is regulated as follows. Inhibited by ammonium and thiosulfate. In terms of biological role, ion transporter that can act both as an ion channel and anion exchanger. Mainly acts as a chloride channel, which mediate uncoupled chloride anion transport in an alternate-access mechanism where a saturable binding site is alternately exposed to either one or the other side of the membrane. Also acts as a DIDS- and thiosulfate- sensitive anion exchanger the exchange of chloride for bicarbonate ions across the cell membrane. This is Solute carrier family 26 member 9 from Mus musculus (Mouse).